Consider the following 325-residue polypeptide: G-protein coupled receptor E6 (325 aa).

7 helical membrane passes run 45 to 65 (LFGT…MGFF), 71 to 91 (FTPS…LWLM), 106 to 126 (IVTE…NVGM), 145 to 165 (PAAI…VIAV), 198 to 218 (LVAK…GTAL), 233 to 253 (AICV…LTAM), and 274 to 294 (VFIY…MFTG).

The protein belongs to the G-protein coupled receptor 1 family.

Its subcellular location is the host membrane. In Equus caballus (Horse), this protein is G-protein coupled receptor E6 (E6).